The primary structure comprises 334 residues: Porphobilinogen deaminase (334 aa).

C250 is subject to S-(dipyrrolylmethanemethyl)cysteine.

Belongs to the HMBS family. As to quaternary structure, monomer. The cofactor is dipyrromethane.

The enzyme catalyses 4 porphobilinogen + H2O = hydroxymethylbilane + 4 NH4(+). It functions in the pathway porphyrin-containing compound metabolism; protoporphyrin-IX biosynthesis; coproporphyrinogen-III from 5-aminolevulinate: step 2/4. Functionally, tetrapolymerization of the monopyrrole PBG into the hydroxymethylbilane pre-uroporphyrinogen in several discrete steps. In Cutibacterium acnes (strain DSM 16379 / KPA171202) (Propionibacterium acnes), this protein is Porphobilinogen deaminase.